The sequence spans 612 residues: Membrane protein insertase YidC (612 aa).

The next 7 helical transmembrane spans lie at 4–24 (NTII…YLNH), 329–349 (LVPL…IPIF), 358–378 (VNLG…LFPL), 434–454 (ILLQ…AIGL), 484–504 (FLGN…ILNT), 524–544 (LTMY…PAGL), and 546–566 (YYYL…RGLV).

Belongs to the OXA1/ALB3/YidC family. Type 1 subfamily. As to quaternary structure, interacts with the Sec translocase complex via SecD. Specifically interacts with transmembrane segments of nascent integral membrane proteins during membrane integration.

The protein localises to the cell inner membrane. In terms of biological role, required for the insertion and/or proper folding and/or complex formation of integral membrane proteins into the membrane. Involved in integration of membrane proteins that insert both dependently and independently of the Sec translocase complex, as well as at least some lipoproteins. Aids folding of multispanning membrane proteins. This Azobacteroides pseudotrichonymphae genomovar. CFP2 protein is Membrane protein insertase YidC.